The primary structure comprises 335 residues: tRNA pseudouridine synthase D (335 aa).

Asp-77 acts as the Nucleophile in catalysis. The TRUD domain maps to 152 to 308; the sequence is GFPNYFTEQR…AQHLSWSFIP (157 aa).

The protein belongs to the pseudouridine synthase TruD family.

The enzyme catalyses uridine(13) in tRNA = pseudouridine(13) in tRNA. In terms of biological role, responsible for synthesis of pseudouridine from uracil-13 in transfer RNAs. This Histophilus somni (strain 129Pt) (Haemophilus somnus) protein is tRNA pseudouridine synthase D.